Reading from the N-terminus, the 179-residue chain is UPF0167 protein PA1536 (179 aa).

Belongs to the UPF0167 family.

This is UPF0167 protein PA1536 from Pseudomonas aeruginosa (strain ATCC 15692 / DSM 22644 / CIP 104116 / JCM 14847 / LMG 12228 / 1C / PRS 101 / PAO1).